The primary structure comprises 55 residues: Variant surface glycoprotein ETAT 1.2 (55 aa).

N-linked (GlcNAc...) asparagine glycosylation occurs at Asn34. Asn38 is lipidated: GPI-anchor amidated asparagine. A propeptide spans 39–55 (removed in mature form); sequence NSFAIKTSTLLLAVLLF.

The protein localises to the cell membrane. In terms of biological role, VSG forms a coat on the surface of the parasite. The trypanosome evades the immune response of the host by expressing a series of antigenically distinct VSGs from an estimated 1000 VSG genes. The chain is Variant surface glycoprotein ETAT 1.2 from Trypanosoma brucei rhodesiense.